The following is a 387-amino-acid chain: F-box protein At5g41490 (387 aa).

The 46-residue stretch at 2-47 (ATMITNLRRDLIEEIISRVPLRSMKAVRLTCKSWNNISKSEIFTKM) folds into the F-box domain.

The protein is F-box protein At5g41490 of Arabidopsis thaliana (Mouse-ear cress).